The chain runs to 159 residues: S-ribosylhomocysteine lyase (159 aa).

Residues His-53, His-57, and Cys-124 each coordinate Fe cation.

The protein belongs to the LuxS family. In terms of assembly, homodimer. Fe cation serves as cofactor.

The catalysed reaction is S-(5-deoxy-D-ribos-5-yl)-L-homocysteine = (S)-4,5-dihydroxypentane-2,3-dione + L-homocysteine. Involved in the synthesis of autoinducer 2 (AI-2) which is secreted by bacteria and is used to communicate both the cell density and the metabolic potential of the environment. The regulation of gene expression in response to changes in cell density is called quorum sensing. Catalyzes the transformation of S-ribosylhomocysteine (RHC) to homocysteine (HC) and 4,5-dihydroxy-2,3-pentadione (DPD). The sequence is that of S-ribosylhomocysteine lyase from Clostridium beijerinckii (strain ATCC 51743 / NCIMB 8052) (Clostridium acetobutylicum).